The chain runs to 437 residues: Serine--tRNA ligase (437 aa).

Residue 244–246 (TAE) coordinates L-serine. Residue 275-277 (RSE) coordinates ATP. An L-serine-binding site is contributed by Glu298. Residue 362–365 (EISS) participates in ATP binding. An L-serine-binding site is contributed by Ser397.

It belongs to the class-II aminoacyl-tRNA synthetase family. Type-1 seryl-tRNA synthetase subfamily. In terms of assembly, homodimer. The tRNA molecule binds across the dimer.

The protein resides in the cytoplasm. It catalyses the reaction tRNA(Ser) + L-serine + ATP = L-seryl-tRNA(Ser) + AMP + diphosphate + H(+). The catalysed reaction is tRNA(Sec) + L-serine + ATP = L-seryl-tRNA(Sec) + AMP + diphosphate + H(+). The protein operates within aminoacyl-tRNA biosynthesis; selenocysteinyl-tRNA(Sec) biosynthesis; L-seryl-tRNA(Sec) from L-serine and tRNA(Sec): step 1/1. In terms of biological role, catalyzes the attachment of serine to tRNA(Ser). Is also able to aminoacylate tRNA(Sec) with serine, to form the misacylated tRNA L-seryl-tRNA(Sec), which will be further converted into selenocysteinyl-tRNA(Sec). The chain is Serine--tRNA ligase from Nitrosomonas europaea (strain ATCC 19718 / CIP 103999 / KCTC 2705 / NBRC 14298).